The primary structure comprises 514 residues: Peptide chain release factor 3 (514 aa).

A tr-type G domain is found at 8–268; sequence KKRRTFAIIS…IFLKFAPEPH (261 aa). Residues 17–24, 85–89, and 139–142 contribute to the GTP site; these read SHPDAGKT, DTPGH, and NKLD.

Belongs to the TRAFAC class translation factor GTPase superfamily. Classic translation factor GTPase family. PrfC subfamily.

The protein resides in the cytoplasm. Functionally, increases the formation of ribosomal termination complexes and stimulates activities of RF-1 and RF-2. It binds guanine nucleotides and has strong preference for UGA stop codons. It may interact directly with the ribosome. The stimulation of RF-1 and RF-2 is significantly reduced by GTP and GDP, but not by GMP. The protein is Peptide chain release factor 3 of Streptococcus pneumoniae (strain P1031).